We begin with the raw amino-acid sequence, 1065 residues long: Carbamoyl phosphate synthase large chain (1065 aa).

Residues Met-1–Glu-401 form a carboxyphosphate synthetic domain region. Arg-129, Arg-169, Gly-175, Gly-176, Gln-208, Val-210, Glu-215, Gly-241, Val-242, His-243, Gln-284, and Glu-298 together coordinate ATP. The ATP-grasp 1 domain occupies Lys-133–Val-327. Mg(2+) is bound by residues Gln-284, Glu-298, and Asn-300. The Mn(2+) site is built by Gln-284, Glu-298, and Asn-300. The oligomerization domain stretch occupies residues Gly-402 to Asn-548. A carbamoyl phosphate synthetic domain region spans residues Glu-549–Gly-931. The 191-residue stretch at Ser-673 to Thr-863 folds into the ATP-grasp 2 domain. ATP is bound by residues Arg-709, Lys-748, Ile-750, Glu-754, Gly-779, Val-780, His-781, Ser-782, Gln-822, and Glu-834. Mg(2+)-binding residues include Gln-822, Glu-834, and Asn-836. Residues Gln-822, Glu-834, and Asn-836 each coordinate Mn(2+). The 134-residue stretch at Ile-932 to Lys-1065 folds into the MGS-like domain. Residues Ile-932–Lys-1065 are allosteric domain.

This sequence belongs to the CarB family. Composed of two chains; the small (or glutamine) chain promotes the hydrolysis of glutamine to ammonia, which is used by the large (or ammonia) chain to synthesize carbamoyl phosphate. Tetramer of heterodimers (alpha,beta)4. Mg(2+) is required as a cofactor. It depends on Mn(2+) as a cofactor.

The catalysed reaction is hydrogencarbonate + L-glutamine + 2 ATP + H2O = carbamoyl phosphate + L-glutamate + 2 ADP + phosphate + 2 H(+). It catalyses the reaction hydrogencarbonate + NH4(+) + 2 ATP = carbamoyl phosphate + 2 ADP + phosphate + 2 H(+). The protein operates within amino-acid biosynthesis; L-arginine biosynthesis; carbamoyl phosphate from bicarbonate: step 1/1. It functions in the pathway pyrimidine metabolism; UMP biosynthesis via de novo pathway; (S)-dihydroorotate from bicarbonate: step 1/3. Its function is as follows. Large subunit of the glutamine-dependent carbamoyl phosphate synthetase (CPSase). CPSase catalyzes the formation of carbamoyl phosphate from the ammonia moiety of glutamine, carbonate, and phosphate donated by ATP, constituting the first step of 2 biosynthetic pathways, one leading to arginine and/or urea and the other to pyrimidine nucleotides. The large subunit (synthetase) binds the substrates ammonia (free or transferred from glutamine from the small subunit), hydrogencarbonate and ATP and carries out an ATP-coupled ligase reaction, activating hydrogencarbonate by forming carboxy phosphate which reacts with ammonia to form carbamoyl phosphate. This chain is Carbamoyl phosphate synthase large chain, found in Clostridium acetobutylicum (strain ATCC 824 / DSM 792 / JCM 1419 / IAM 19013 / LMG 5710 / NBRC 13948 / NRRL B-527 / VKM B-1787 / 2291 / W).